Consider the following 611-residue polypeptide: Virulence metalloprotease (611 aa).

The signal sequence occupies residues 1 to 25 (MKKVQRQMKWLFLAASISAALPVSA). The propeptide occupies 26-199 (AKMVQVDDPS…VLQTWEGLNH (174 aa)). Zn(2+) is bound at residue His346. The active site involves Glu347. Positions 350 and 370 each coordinate Zn(2+). The active-site Proton donor is His429.

The protein belongs to the peptidase M4 family. Ca(2+) is required as a cofactor. The cofactor is Zn(2+). Post-translationally, seems to be more extensively processed.

The protein resides in the secreted. Its function is as follows. Extracellular zinc metalloprotease involved in the virulence mechanism of V.anguillarum. The sequence is that of Virulence metalloprotease (empA) from Vibrio anguillarum (Listonella anguillarum).